A 205-amino-acid polypeptide reads, in one-letter code: ATP synthase subunit b 1 (205 aa).

Polar residues predominate over residues Met-1–Gln-15. The interval Met-1–Ala-26 is disordered. A compositionally biased stretch (low complexity) spans Pro-16–Ala-26. The chain crosses the membrane as a helical span at residues Ser-56–Pro-78.

Belongs to the ATPase B chain family. As to quaternary structure, F-type ATPases have 2 components, F(1) - the catalytic core - and F(0) - the membrane proton channel. F(1) has five subunits: alpha(3), beta(3), gamma(1), delta(1), epsilon(1). F(0) has three main subunits: a(1), b(2) and c(10-14). The alpha and beta chains form an alternating ring which encloses part of the gamma chain. F(1) is attached to F(0) by a central stalk formed by the gamma and epsilon chains, while a peripheral stalk is formed by the delta and b chains.

It localises to the cell inner membrane. F(1)F(0) ATP synthase produces ATP from ADP in the presence of a proton or sodium gradient. F-type ATPases consist of two structural domains, F(1) containing the extramembraneous catalytic core and F(0) containing the membrane proton channel, linked together by a central stalk and a peripheral stalk. During catalysis, ATP synthesis in the catalytic domain of F(1) is coupled via a rotary mechanism of the central stalk subunits to proton translocation. Functionally, component of the F(0) channel, it forms part of the peripheral stalk, linking F(1) to F(0). This is ATP synthase subunit b 1 from Brucella anthropi (strain ATCC 49188 / DSM 6882 / CCUG 24695 / JCM 21032 / LMG 3331 / NBRC 15819 / NCTC 12168 / Alc 37) (Ochrobactrum anthropi).